The following is a 228-amino-acid chain: Probable septum site-determining protein MinC (228 aa).

This sequence belongs to the MinC family. In terms of assembly, interacts with MinD and FtsZ.

In terms of biological role, cell division inhibitor that blocks the formation of polar Z ring septums. Rapidly oscillates between the poles of the cell to destabilize FtsZ filaments that have formed before they mature into polar Z rings. Prevents FtsZ polymerization. In Symbiobacterium thermophilum (strain DSM 24528 / JCM 14929 / IAM 14863 / T), this protein is Probable septum site-determining protein MinC.